The chain runs to 599 residues: Ecdysone oxidase (599 aa).

FAD contacts are provided by residues 137-140 (NDMV) and 537-538 (WH). Histidine 538 acts as the Proton acceptor in catalysis.

This sequence belongs to the GMC oxidoreductase family. Requires FAD as cofactor.

The catalysed reaction is ecdysone + O2 = 3-dehydroecdysone + H2O2. Involved in the inactivation of ecdysteroid molting hormones by converting ecdysteroids into 3-dehydroecdysteroids. This chain is Ecdysone oxidase, found in Spodoptera littoralis (Egyptian cotton leafworm).